The chain runs to 198 residues: dITP/XTP pyrophosphatase (198 aa).

Position 11–16 (11–16) interacts with substrate; it reads THNPGK. Positions 44 and 73 each coordinate Mg(2+). Catalysis depends on Asp-73, which acts as the Proton acceptor. Residues Ser-74, 156–159, Lys-179, and 184–185 contribute to the substrate site; these read FGYD and HR.

It belongs to the HAM1 NTPase family. In terms of assembly, homodimer. The cofactor is Mg(2+).

The catalysed reaction is XTP + H2O = XMP + diphosphate + H(+). The enzyme catalyses dITP + H2O = dIMP + diphosphate + H(+). It carries out the reaction ITP + H2O = IMP + diphosphate + H(+). Functionally, pyrophosphatase that catalyzes the hydrolysis of nucleoside triphosphates to their monophosphate derivatives, with a high preference for the non-canonical purine nucleotides XTP (xanthosine triphosphate), dITP (deoxyinosine triphosphate) and ITP. Seems to function as a house-cleaning enzyme that removes non-canonical purine nucleotides from the nucleotide pool, thus preventing their incorporation into DNA/RNA and avoiding chromosomal lesions. In Bacillus subtilis (strain 168), this protein is dITP/XTP pyrophosphatase (ysnA).